The following is a 416-amino-acid chain: Glutamyl-tRNA reductase (416 aa).

Substrate contacts are provided by residues 49 to 52 (TCNR), serine 105, 110 to 112 (EPQ), and glutamine 116. Cysteine 50 (nucleophile) is an active-site residue. An NADP(+)-binding site is contributed by 185 to 190 (GAGETI).

The protein belongs to the glutamyl-tRNA reductase family. Homodimer.

The enzyme catalyses (S)-4-amino-5-oxopentanoate + tRNA(Glu) + NADP(+) = L-glutamyl-tRNA(Glu) + NADPH + H(+). It participates in porphyrin-containing compound metabolism; protoporphyrin-IX biosynthesis; 5-aminolevulinate from L-glutamyl-tRNA(Glu): step 1/2. In terms of biological role, catalyzes the NADPH-dependent reduction of glutamyl-tRNA(Glu) to glutamate 1-semialdehyde (GSA). The polypeptide is Glutamyl-tRNA reductase (Shewanella pealeana (strain ATCC 700345 / ANG-SQ1)).